The sequence spans 176 residues: ATP-dependent protease subunit HslV (176 aa).

Residue threonine 6 is part of the active site. Na(+)-binding residues include serine 161, cysteine 164, and threonine 167.

The protein belongs to the peptidase T1B family. HslV subfamily. As to quaternary structure, a double ring-shaped homohexamer of HslV is capped on each side by a ring-shaped HslU homohexamer. The assembly of the HslU/HslV complex is dependent on binding of ATP.

The protein resides in the cytoplasm. The enzyme catalyses ATP-dependent cleavage of peptide bonds with broad specificity.. Its activity is regulated as follows. Allosterically activated by HslU binding. Its function is as follows. Protease subunit of a proteasome-like degradation complex believed to be a general protein degrading machinery. This is ATP-dependent protease subunit HslV from Pseudothermotoga lettingae (strain ATCC BAA-301 / DSM 14385 / NBRC 107922 / TMO) (Thermotoga lettingae).